The primary structure comprises 457 residues: Tryptophan aminotransferase-related protein 3 (457 aa).

The helical transmembrane segment at 6–26 (LLIAGSIILNLVFTIHILYNN) threads the bilayer. Residues Tyr-123, 163-164 (AT), Asn-237, 257-260 (DYAY), 280-283 (SLSK), and Arg-291 each bind pyridoxal 5'-phosphate. Lys-283 carries the N6-(pyridoxal phosphate)lysine modification.

The protein belongs to the alliinase family. Pyridoxal 5'-phosphate is required as a cofactor.

It localises to the membrane. Functionally, probable aminotransferase. In Arabidopsis thaliana (Mouse-ear cress), this protein is Tryptophan aminotransferase-related protein 3 (TAR3).